We begin with the raw amino-acid sequence, 232 residues long: 7-cyano-7-deazaguanine synthase 2 (232 aa).

9–19 (FSGGQDSTTCL) contacts ATP. Positions 189, 198, 201, and 204 each coordinate Zn(2+).

This sequence belongs to the QueC family. Zn(2+) serves as cofactor.

The catalysed reaction is 7-carboxy-7-deazaguanine + NH4(+) + ATP = 7-cyano-7-deazaguanine + ADP + phosphate + H2O + H(+). The protein operates within purine metabolism; 7-cyano-7-deazaguanine biosynthesis. Catalyzes the ATP-dependent conversion of 7-carboxy-7-deazaguanine (CDG) to 7-cyano-7-deazaguanine (preQ(0)). The protein is 7-cyano-7-deazaguanine synthase 2 of Pseudomonas fluorescens (strain ATCC BAA-477 / NRRL B-23932 / Pf-5).